The chain runs to 396 residues: 1-deoxy-D-xylulose 5-phosphate reductoisomerase (396 aa).

The NADPH site is built by threonine 10, glycine 11, serine 12, isoleucine 13, and asparagine 123. Lysine 124 is a 1-deoxy-D-xylulose 5-phosphate binding site. Glutamate 125 lines the NADPH pocket. Aspartate 149 contacts Mn(2+). 1-deoxy-D-xylulose 5-phosphate-binding residues include serine 150, glutamate 151, serine 185, and histidine 208. Residue glutamate 151 coordinates Mn(2+). Glycine 214 is an NADPH binding site. 1-deoxy-D-xylulose 5-phosphate is bound by residues serine 221, asparagine 226, lysine 227, and glutamate 230. Residue glutamate 230 coordinates Mn(2+).

This sequence belongs to the DXR family. Requires Mg(2+) as cofactor. Mn(2+) serves as cofactor.

The enzyme catalyses 2-C-methyl-D-erythritol 4-phosphate + NADP(+) = 1-deoxy-D-xylulose 5-phosphate + NADPH + H(+). It participates in isoprenoid biosynthesis; isopentenyl diphosphate biosynthesis via DXP pathway; isopentenyl diphosphate from 1-deoxy-D-xylulose 5-phosphate: step 1/6. In terms of biological role, catalyzes the NADPH-dependent rearrangement and reduction of 1-deoxy-D-xylulose-5-phosphate (DXP) to 2-C-methyl-D-erythritol 4-phosphate (MEP). The chain is 1-deoxy-D-xylulose 5-phosphate reductoisomerase from Shewanella frigidimarina (strain NCIMB 400).